Consider the following 427-residue polypeptide: tRNA(Ile)-lysidine synthase (427 aa).

29 to 34 (SGGVDS) is a binding site for ATP.

This sequence belongs to the tRNA(Ile)-lysidine synthase family.

It is found in the cytoplasm. It catalyses the reaction cytidine(34) in tRNA(Ile2) + L-lysine + ATP = lysidine(34) in tRNA(Ile2) + AMP + diphosphate + H(+). Its function is as follows. Ligates lysine onto the cytidine present at position 34 of the AUA codon-specific tRNA(Ile) that contains the anticodon CAU, in an ATP-dependent manner. Cytidine is converted to lysidine, thus changing the amino acid specificity of the tRNA from methionine to isoleucine. The polypeptide is tRNA(Ile)-lysidine synthase (Thermosipho africanus (strain TCF52B)).